A 115-amino-acid polypeptide reads, in one-letter code: Probable 4-amino-4-deoxy-L-arabinose-phosphoundecaprenol flippase subunit ArnE (115 aa).

Helical transmembrane passes span 1–21, 43–63, 65–85, and 93–113; these read MIVG…GQLC, WLAL…NVLQ, LPLS…TLAA, and TTAR…LMSI. One can recognise an EamA domain in the interval 44–113; the sequence is LALAVLLLGL…IMLGILLMSI (70 aa).

The protein belongs to the ArnE family. As to quaternary structure, heterodimer of ArnE and ArnF.

It is found in the cell inner membrane. It functions in the pathway bacterial outer membrane biogenesis; lipopolysaccharide biosynthesis. Translocates 4-amino-4-deoxy-L-arabinose-phosphoundecaprenol (alpha-L-Ara4N-phosphoundecaprenol) from the cytoplasmic to the periplasmic side of the inner membrane. In Serratia proteamaculans (strain 568), this protein is Probable 4-amino-4-deoxy-L-arabinose-phosphoundecaprenol flippase subunit ArnE.